The chain runs to 571 residues: Membrane protein insertase YidC (571 aa).

The helical transmembrane segment at 4-24 threads the bilayer; sequence TRVFLIFAWLMVAVLLWMEWS. The segment at 29–78 is disordered; that stretch reads APTPAPTTTSAPAAAQSVPGANPGAIPSAQVPGAPGQAAAQAQASATPAS. 2 stretches are compositionally biased toward low complexity: residues 34-43 and 55-78; these read PTTTSAPAAA and PSAQ…TPAS. A run of 4 helical transmembrane segments spans residues 369–389, 440–460, 483–503, and 518–538; these read LVGN…LVLY, GGCL…WVLV, YFIL…LTPA, and PLVF…YWVV.

It belongs to the OXA1/ALB3/YidC family. Type 1 subfamily. Interacts with the Sec translocase complex via SecD. Specifically interacts with transmembrane segments of nascent integral membrane proteins during membrane integration.

It localises to the cell inner membrane. Its function is as follows. Required for the insertion and/or proper folding and/or complex formation of integral membrane proteins into the membrane. Involved in integration of membrane proteins that insert both dependently and independently of the Sec translocase complex, as well as at least some lipoproteins. Aids folding of multispanning membrane proteins. This is Membrane protein insertase YidC from Stenotrophomonas maltophilia (strain K279a).